The sequence spans 578 residues: NADPH oxidase 4 (578 aa).

At 1 to 16 the chain is on the cytoplasmic side; it reads MAVSWRSWLANEGVKH. A helical transmembrane segment spans residues 17 to 37; sequence LCLFIWLSMNVLLFWKTFLLY. Residues 38-62 are Extracellular-facing; that stretch reads NQGPEYHYLHQMLGLGLCLSRASAS. Residues 58 to 303 form the Ferric oxidoreductase domain; the sequence is RASASVLNLN…YCAERLYRYI (246 aa). Residues 63 to 83 form a helical membrane-spanning segment; the sequence is VLNLNCSLILLPMCRTLLAYL. Topologically, residues 84–103 are cytoplasmic; sequence RGSQKVPSRRTRRLLDKSRT. The helical transmembrane segment at 104 to 124 threads the bilayer; the sequence is FHITCGVTICIFSGVHVAAHL. Over 125–154 the chain is Extracellular; that stretch reads VNALNFSVNYSEDFVELNAARYRDEDPRKL. N-linked (GlcNAc...) asparagine glycosylation is present at Asn-133. A helical transmembrane segment spans residues 155–175; the sequence is LFTTVPGLTGVCMVVVLFLMI. The Cytoplasmic segment spans residues 176–188; sequence TASTYAIRVSNYD. The chain crosses the membrane as a helical span at residues 189–209; it reads IFWYTHNLFFVFYMLLTLHVS. Over 210–424 the chain is Extracellular; that stretch reads GGLLKYQTNL…SPFEESLNYE (215 aa). The E-loop; essential for H2O2 generating catalytic activity stretch occupies residues 218–273; sequence NLDTHPPGCISLNRTSSQNISLPEYFSEHFHEPFPEGFSKPEEFTQNTFVKICMEE. The N-linked (GlcNAc...) asparagine glycan is linked to Asn-230. The interval 248–575 is mediates interaction with TLR4; it reads HEPFPEGFSK…YGTRFEYNKE (328 aa). In terms of domain architecture, FAD-binding FR-type spans 304-419; sequence RSNKPVTIIS…DGPFGSPFEE (116 aa). A helical membrane pass occupies residues 425-445; it reads VSLCVAGGIGVTPFASILNTL. Topologically, residues 446–578 are cytoplasmic; sequence LDDWKPYKLR…RFEYNKESFS (133 aa).

Interacts with, relocalizes and stabilizes CYBA/p22phox. Interacts with TLR4. Interacts with protein disulfide isomerase. Interacts with PPP1R15A. Interacts with LRRC8A; this interaction prevents the ubiquitin-mediated degradation of LRRC8A. Heme is required as a cofactor. N-glycosylation is required for the function.

The protein resides in the cytoplasm. The protein localises to the endoplasmic reticulum membrane. It localises to the cell membrane. It is found in the cell junction. Its subcellular location is the focal adhesion. The protein resides in the nucleus. It catalyses the reaction NADPH + 2 O2 = 2 superoxide + NADP(+) + H(+). The enzyme catalyses NADPH + O2 + H(+) = H2O2 + NADP(+). Activated by insulin. Inhibited by diphenylene iodonium. Inhibited by plumbagin. Activated by phorbol 12-myristate 13-acetate (PMA). Functionally, NADPH oxidase that catalyzes predominantly the reduction of oxygen to H2O2. Can also catalyze to a smaller extent, the reduction of oxygen to superoxide. May function as an oxygen sensor regulating the KCNK3/TASK-1 potassium channel and HIF1A activity. May regulate insulin signaling cascade. May play a role in apoptosis, bone resorption and lipolysaccharide-mediated activation of NFKB. May produce superoxide in the nucleus and play a role in regulating gene expression upon cell stimulation. Promotes ferroptosis, reactive oxygen species production and reduced glutathione (GSH) levels by activating NLRP3 inflammasome activation and cytokine release. The chain is NADPH oxidase 4 (NOX4) from Pongo abelii (Sumatran orangutan).